The sequence spans 1670 residues: Protein TASOR (1670 aa).

The segment at 1 to 110 is disordered; it reads MATAVETEAC…QIPRKSREKK (110 aa). Alanine 2 is modified (N-acetylalanine). Polar residues predominate over residues 67-78; sequence QSLSHEQPQDSS. The residue at position 344 (serine 344) is a Phosphoserine. A Glycyl lysine isopeptide (Lys-Gly) (interchain with G-Cter in SUMO2) cross-link involves residue lysine 586. Phosphoserine is present on residues serine 633, serine 636, serine 673, and serine 800. Residues lysine 823 and lysine 832 each participate in a glycyl lysine isopeptide (Lys-Gly) (interchain with G-Cter in SUMO2) cross-link. At serine 843 the chain carries Phosphoserine. A Glycyl lysine isopeptide (Lys-Gly) (interchain with G-Cter in SUMO2) cross-link involves residue lysine 872. The interval 921–947 is disordered; sequence TGGNARSPEDQLGKHGEKQTPGMKSPE. A phosphoserine mark is found at serine 927, serine 971, and serine 979. The segment covering 927-938 has biased composition (basic and acidic residues); that stretch reads SPEDQLGKHGEK. Residues threonine 982 and threonine 1049 each carry the phosphothreonine modification. A Phosphoserine modification is found at serine 1103. Basic and acidic residues predominate over residues 1532-1545; the sequence is ETKGSRGTDQKKNT. Disordered stretches follow at residues 1532-1558 and 1638-1670; these read ETKG…VQNS and FLSA…SQEK. Polar residues-rich tracts occupy residues 1546–1558 and 1659–1670; these read QIEL…VQNS and KSDSSRPYSQEK. Serine 1552 is modified (phosphoserine).

The protein belongs to the TASOR family. As to quaternary structure, component of the HUSH complex; at least composed of TASOR, PPHLN1 and MPHOSPH8. Interacts with MORC2; the interaction associateS MORC2 with the HUSH complex which recruits MORC2 to heterochromatic loci. Interacts with ZNF638; leading to recruitment of the HUSH complex to unintegrated retroviral DNA. Interacts with INPP5A, EML1, SV1L, GPSM2, ITGB3BP, CNTN1, ETFA, PSMD8, S100A10, MPHOSPH8, TMEM100, ALB, PARPBP, HCFC2, NCBP1 and SETDB1.

It localises to the nucleus. Its subcellular location is the chromosome. Functionally, component of the HUSH complex, a multiprotein complex that mediates epigenetic repression. The HUSH complex is recruited to genomic loci rich in H3K9me3 and is required to maintain transcriptional silencing by promoting recruitment of SETDB1, a histone methyltransferase that mediates further deposition of H3K9me3, as well as MORC2. Also represses L1 retrotransposons in collaboration with MORC2 and, probably, SETDB1, the silencing is dependent of repressive epigenetic modifications, such as H3K9me3 mark. Silencing events often occur within introns of transcriptionally active genes, and lead to the down-regulation of host gene expression. The HUSH complex is also involved in the silencing of unintegrated retroviral DNA by being recruited by ZNF638: some part of the retroviral DNA formed immediately after infection remains unintegrated in the host genome and is transcriptionally repressed. Plays a crucial role in early embryonic development. Involved in the organization of spindle poles and spindle apparatus assembly during zygotic division. Plays an important role in maintaining epiblast fitness or potency. In Homo sapiens (Human), this protein is Protein TASOR.